The following is a 464-amino-acid chain: Asparagine--tRNA ligase (464 aa).

This sequence belongs to the class-II aminoacyl-tRNA synthetase family. As to quaternary structure, homodimer.

The protein localises to the cytoplasm. The catalysed reaction is tRNA(Asn) + L-asparagine + ATP = L-asparaginyl-tRNA(Asn) + AMP + diphosphate + H(+). The sequence is that of Asparagine--tRNA ligase from Clostridium botulinum (strain Alaska E43 / Type E3).